A 287-amino-acid polypeptide reads, in one-letter code: ATP synthase gamma chain (287 aa).

This sequence belongs to the ATPase gamma chain family. F-type ATPases have 2 components, CF(1) - the catalytic core - and CF(0) - the membrane proton channel. CF(1) has five subunits: alpha(3), beta(3), gamma(1), delta(1), epsilon(1). CF(0) has three main subunits: a, b and c.

The protein localises to the cell inner membrane. Produces ATP from ADP in the presence of a proton gradient across the membrane. The gamma chain is believed to be important in regulating ATPase activity and the flow of protons through the CF(0) complex. The polypeptide is ATP synthase gamma chain (Yersinia pestis).